The chain runs to 541 residues: MAKIIAFDEEARRGLERGMNQLADAVKVTLGPKGRNVVLEKKWGAPTITNDGVSIAKEIELEDPYEKIGAELVKEVAKKTDDVAGDGTTTATVLAQALVKEGLRNVAAGANPMALKRGIEKAVEAVSAALLEQAKDVETKEQIASTASISAADTQIGELIAEAMDKVGKEGVITVEESQTFGLELELTEGMRFDKGYISAYFATDMERMEASLDDPYILIANSKIGNVKDLLPLLEKVMQSGKPLLIIAEDVEGEALSTLVVNKIRGTFKSVAVKAPGFGDRRKAMLGDIAILTGGEVISEEVGLKLENATLDLLGSARKVVITKDETTIVDGAGSADQVQGRVNQIRAEIENSDSDYDREKLQERLAKLAGGVAVIKAGAATEVELKERKHRIEDAVRNAKAAVEEGIVAGGGVALLQASQVFEKLELTGDEATGANAVKLALEAPLKQIAVNGGLEGGVVVEKVRNLTVGHGLNAATGEYVDMIAEGIIDPAKVTRSALQNAASIAALFLTTEAVIADKPEKAAPAGAPGGMPGGDMDF.

Residues 29–32 (TLGP), 86–90 (DGTTT), Gly413, 476–478 (NAA), and Asp492 each bind ATP.

It belongs to the chaperonin (HSP60) family. As to quaternary structure, forms a cylinder of 14 subunits composed of two heptameric rings stacked back-to-back. Interacts with the co-chaperonin GroES.

It is found in the cytoplasm. It carries out the reaction ATP + H2O + a folded polypeptide = ADP + phosphate + an unfolded polypeptide.. In terms of biological role, together with its co-chaperonin GroES, plays an essential role in assisting protein folding. The GroEL-GroES system forms a nano-cage that allows encapsulation of the non-native substrate proteins and provides a physical environment optimized to promote and accelerate protein folding. The protein is Chaperonin GroEL 2 of Streptomyces coelicolor (strain ATCC BAA-471 / A3(2) / M145).